A 700-amino-acid polypeptide reads, in one-letter code: Polyribonucleotide nucleotidyltransferase (700 aa).

The Mg(2+) site is built by Asp-485 and Asp-491. In terms of domain architecture, KH spans 552–611; it reads PRITTLKINPEKIRDVIGKGGATIRALTEETGTTIELEDDGTVKIASANGDATKEAIRRI. Residues 621–689 form the S1 motif domain; the sequence is GTVYNGKVVR…RQGRVRLSMK (69 aa).

The protein belongs to the polyribonucleotide nucleotidyltransferase family. As to quaternary structure, component of the RNA degradosome, which is a multiprotein complex involved in RNA processing and mRNA degradation. It depends on Mg(2+) as a cofactor.

The protein localises to the cytoplasm. The catalysed reaction is RNA(n+1) + phosphate = RNA(n) + a ribonucleoside 5'-diphosphate. In terms of biological role, involved in mRNA degradation. Catalyzes the phosphorolysis of single-stranded polyribonucleotides processively in the 3'- to 5'-direction. The chain is Polyribonucleotide nucleotidyltransferase from Shewanella loihica (strain ATCC BAA-1088 / PV-4).